The chain runs to 229 residues: UPF0758 protein Moth_0536 (229 aa).

The MPN domain maps to 107–229; it reads VIRNPRDVAG…FTSLKERNLL (123 aa). Zn(2+) is bound by residues His-178, His-180, and Asp-191. Residues 178–191 carry the JAMM motif motif; the sequence is HNHPSGDPTPSQED.

It belongs to the UPF0758 family.

In Moorella thermoacetica (strain ATCC 39073 / JCM 9320), this protein is UPF0758 protein Moth_0536.